The following is a 956-amino-acid chain: Zinc protease PQQL-like (956 aa).

The residue at position 1 (methionine 1) is an N-acetylmethionine. Histidine 85 contacts Zn(2+). Residue glutamate 88 is the Proton acceptor of the active site. A Zn(2+)-binding site is contributed by histidine 89. Residue glutamate 165 is part of the active site. Glutamate 172 is a binding site for Zn(2+).

Belongs to the peptidase M16 family. Zn(2+) serves as cofactor.

The protein is Zinc protease PQQL-like of Arabidopsis thaliana (Mouse-ear cress).